Reading from the N-terminus, the 361-residue chain is MNKLALYCRAGFEKETAGEITDKAAQLGVFGFVNLKENSGYIIFECYQAGDADRLARELKFEQLIFARQMIVVGDMLQDLPVEDRISPIVAQYQALNPRHSSDIFVETPDTNEAKELLTFCRKFTVPLRNSLKKQGWLTKSERAKGSIGLHILFVRPGCCYVGYAYNDNKSPFFMGIPRLKFPAEAPSRSTLKLEEAILTFIPEAEEKKRFTDEMTGVDLGACPGGWTYQLVKRGVFVYAVDHGKMAASLHETGRIEHCPEDGFKFQPPKRKTIDWLVCDMVEQPMRISKLIGKWLINGWCRETIFNLKLPMKKRYQEVQLCLAYLEEELEKQGFWFKIQAKHLYHDREEITVHIAVMGKR.

S-adenosyl-L-methionine-binding positions include Ser190, 223 to 226 (CPGG), Asp242, Asp262, and Asp280. The active-site Proton acceptor is the Lys309.

This sequence belongs to the class I-like SAM-binding methyltransferase superfamily. RNA methyltransferase RlmE family. RlmM subfamily. In terms of assembly, monomer.

The protein localises to the cytoplasm. The enzyme catalyses cytidine(2498) in 23S rRNA + S-adenosyl-L-methionine = 2'-O-methylcytidine(2498) in 23S rRNA + S-adenosyl-L-homocysteine + H(+). Its function is as follows. Catalyzes the 2'-O-methylation at nucleotide C2498 in 23S rRNA. This chain is Ribosomal RNA large subunit methyltransferase M, found in Actinobacillus pleuropneumoniae serotype 7 (strain AP76).